The primary structure comprises 330 residues: Formylaminopyrimidine-binding protein (330 aa).

An N-terminal signal peptide occupies residues 1 to 18; sequence MKSFKIISLLLAILFLAS. Residue C19 is the site of N-palmitoyl cysteine attachment. C19 is lipidated: S-diacylglycerol cysteine. Residues 38–39, Y90, N145, Y188, and E192 each bind substrate; that span reads DW.

The protein belongs to the NMT1 family. As to quaternary structure, the complex is likely composed of an ATP-binding protein (ThiZ), a transmembrane protein (ThiX) and a solute-binding protein (ThiY).

The protein localises to the cell membrane. It participates in cofactor biosynthesis; thiamine diphosphate biosynthesis. In terms of biological role, participates in a thiamine pyrimidine salvage pathway as part of the ABC transporter complex ThiXYZ involved in the import of thiamine degradation products. Binds the formylaminopyrimidine N-formyl-4-amino-5-aminomethyl-2-methylpyrimidine (FAMP). Does not bind thiamine. This Halalkalibacterium halodurans (strain ATCC BAA-125 / DSM 18197 / FERM 7344 / JCM 9153 / C-125) (Bacillus halodurans) protein is Formylaminopyrimidine-binding protein.